The chain runs to 179 residues: Large ribosomal subunit protein uL6 (179 aa).

This sequence belongs to the universal ribosomal protein uL6 family. As to quaternary structure, part of the 50S ribosomal subunit.

Its function is as follows. This protein binds to the 23S rRNA, and is important in its secondary structure. It is located near the subunit interface in the base of the L7/L12 stalk, and near the tRNA binding site of the peptidyltransferase center. The chain is Large ribosomal subunit protein uL6 from Synechococcus sp. (strain CC9311).